Here is a 237-residue protein sequence, read N- to C-terminus: Sugar fermentation stimulation protein homolog (237 aa).

The protein belongs to the SfsA family.

This chain is Sugar fermentation stimulation protein homolog, found in Pseudomonas putida (strain GB-1).